The chain runs to 226 residues: ATP synthase subunit a (226 aa).

Helical transmembrane passes span 17–37 (FSYF…AMMA), 79–99 (LVAT…IPGF), 105–125 (SLNL…FEGI), 134–154 (FAHF…IEIV), 176–196 (LFLM…AYVL), and 199–219 (FMAF…LAGA).

This sequence belongs to the ATPase A chain family. In terms of assembly, F-type ATPases have 2 components, CF(1) - the catalytic core - and CF(0) - the membrane proton channel. CF(1) has five subunits: alpha(3), beta(3), gamma(1), delta(1), epsilon(1). CF(0) has three main subunits: a(1), b(2) and c(9-12). The alpha and beta chains form an alternating ring which encloses part of the gamma chain. CF(1) is attached to CF(0) by a central stalk formed by the gamma and epsilon chains, while a peripheral stalk is formed by the delta and b chains.

Its subcellular location is the cell inner membrane. Functionally, key component of the proton channel; it plays a direct role in the translocation of protons across the membrane. The protein is ATP synthase subunit a of Campylobacter jejuni subsp. jejuni serotype O:23/36 (strain 81-176).